A 246-amino-acid polypeptide reads, in one-letter code: Serine protease 1 (246 aa).

The N-terminal stretch at 1 to 15 (MSALLILALVGAAVA) is a signal peptide. A propeptide spans 16-23 (FPLEDDDK) (activation peptide). Residues 24–244 (IVGGYTCPEH…FVGWIQDTIA (221 aa)) enclose the Peptidase S1 domain. Disulfide bonds link Cys30/Cys160, Cys48/Cys64, Cys132/Cys233, Cys139/Cys206, Cys171/Cys185, and Cys196/Cys220. The active-site Charge relay system is His63. 4 residues coordinate Ca(2+): Glu75, Asn77, Val80, and Glu85. Residue Asp107 is the Charge relay system of the active site. Ser200 functions as the Charge relay system in the catalytic mechanism.

It belongs to the peptidase S1 family. Interacts with SERPINA1. The cofactor is Ca(2+).

Its subcellular location is the secreted. It is found in the extracellular space. The catalysed reaction is Preferential cleavage: Arg-|-Xaa, Lys-|-Xaa.. This is Serine protease 1 from Rattus norvegicus (Rat).